Consider the following 329-residue polypeptide: MMSSAVCRLAPSPTGAQHLGNARTFLIAYWSARAQNARLILRIEDIDSPRIKPWATEQAITDLRWLGMDWDGDPIVQTERSPLYDEARNQLMDADRVYPCSCTRRDIEAAASAPHESEASGWTPDAPVYPGTCASWKNGDPLPEDKPFCFRFRMQATPDRFFDRVHGEVACNPIQDIGDFPITRKAESAADCLAAYQLAVVVDDIDAGVTEVVRGDDLILSTFRQLQLYEALGHSPPSHAHVPLVTGTDGRRLAKRHGDTRLSHFREQGMPPETIVRWAAKSSGLCPDSDAALSERTLDQIHQQMIDRFDWVRIHRQPTVVDDFGSTTD.

L-glutamate is bound by residues 8–12 and glutamate 44; that span reads RLAPS. Residues 11 to 21 carry the 'HIGH' region motif; sequence PSPTGAQHLGN. 4 residues coordinate Zn(2+): cysteine 100, cysteine 102, tyrosine 129, and cysteine 133. L-glutamate is bound by residues tyrosine 196 and arginine 214. Positions 252–256 match the 'KMSKS' region motif; sequence RLAKR. Lysine 255 contributes to the ATP binding site.

The protein belongs to the class-I aminoacyl-tRNA synthetase family. GluQ subfamily. Zn(2+) serves as cofactor.

Its function is as follows. Catalyzes the tRNA-independent activation of glutamate in presence of ATP and the subsequent transfer of glutamate onto a tRNA(Asp). Glutamate is transferred on the 2-amino-5-(4,5-dihydroxy-2-cyclopenten-1-yl) moiety of the queuosine in the wobble position of the QUC anticodon. This Rhodopirellula baltica (strain DSM 10527 / NCIMB 13988 / SH1) protein is Glutamyl-Q tRNA(Asp) synthetase.